We begin with the raw amino-acid sequence, 152 residues long: Proline-rich acidic protein 1 (152 aa).

The first 20 residues, 1 to 20, serve as a signal peptide directing secretion; that stretch reads MKRFLLATCLVAVLLWEAGA.

Interacts with MTTP. Interacts with MAD1L1. As to expression, highly expressed in the small intestine where it shows a proximal-distal graded expression.

The protein localises to the secreted. Its subcellular location is the endoplasmic reticulum. Its function is as follows. Lipid-binding protein which promotes lipid absorption by facilitating MTTP-mediated lipid transfer (mainly triglycerides and phospholipids) and MTTP-mediated apoB lipoprotein assembly and secretion. Protects the gastrointestinal epithelium from irradiation-induced apoptosis. May play an important role in maintaining normal growth homeostasis in epithelial cells. Involved in p53/TP53-dependent cell survival after DNA damage. The protein is Proline-rich acidic protein 1 (Prap1) of Rattus norvegicus (Rat).